Consider the following 199-residue polypeptide: Inner membrane protein E199L (199 aa).

A helical transmembrane segment spans residues 150 to 170; it reads INVMNHPFLTLILIILILIII.

The protein belongs to the asfivirus E199L family. Interacts with host PYCR2; this interaction results in autophagy activation. Post-translationally, contains intramolecular disulfide bonds.

Its subcellular location is the virion membrane. The protein localises to the host membrane. Essential for viral fusion with host endosomal membrane and core release. Not required for virus morphogenesis and egress. Induces complete autophagy through the interaction with and down-regulation of host PYCR2. In Ornithodoros (relapsing fever ticks), this protein is Inner membrane protein E199L.